The chain runs to 227 residues: Cytidylate kinase (227 aa).

Residue 10-18 (GPASSGKST) coordinates ATP.

The protein belongs to the cytidylate kinase family. Type 1 subfamily.

It localises to the cytoplasm. It catalyses the reaction CMP + ATP = CDP + ADP. It carries out the reaction dCMP + ATP = dCDP + ADP. The protein is Cytidylate kinase of Streptococcus agalactiae serotype III (strain NEM316).